The primary structure comprises 61 residues: Large ribosomal subunit protein bL32 (61 aa).

Over residues 1–16 (MAVPKRKTSPSRRGMR) the composition is skewed to basic residues. Residues 1–61 (MAVPKRKTSP…RQILKPKAEA (61 aa)) are disordered. A compositionally biased stretch (basic and acidic residues) spans 28–44 (VEDKDSGELRRPHHLDL).

It belongs to the bacterial ribosomal protein bL32 family.

The polypeptide is Large ribosomal subunit protein bL32 (Xanthobacter autotrophicus (strain ATCC BAA-1158 / Py2)).